Consider the following 387-residue polypeptide: Signal-regulatory protein gamma (387 aa).

The signal sequence occupies residues 1–28; the sequence is MPVPASWPHPPGPFLLLTLLLGLTEVAG. The region spanning 29–137 is the Ig-like V-type domain; it reads EEELQMIQPE…ENVEFKSGPG (109 aa). Residues 29-360 lie on the Extracellular side of the membrane; the sequence is EEELQMIQPE…QKDQSSDATP (332 aa). Intrachain disulfides connect Cys53–Cys119 and Cys168–Cys226. Ig-like C1-type domains follow at residues 146–245 and 252–340; these read PSAP…ANLS and PTLE…LAVS. 4 N-linked (GlcNAc...) asparagine glycosylation sites follow: Asn243, Asn268, Asn309, and Asn317. Cys271 and Cys329 are disulfide-bonded. Residues 361-383 traverse the membrane as a helical segment; the sequence is GPASSLTALLLIAVLLGPIYVPW. Over 384–387 the chain is Cytoplasmic; the sequence is KQKT.

In terms of assembly, interacts with CD47. As to expression, detected in liver, and at very low levels in brain, heart, lung, pancreas, kidney, placenta and skeletal muscle. Expressed on CD4+ T-cells, CD8+ T-cells, CD56-bright natural killer (NK) cells, CD20+ cells, and all activated NK cells. Mainly present in the paracortical T-cell area of lymph nodes, with only sparse positive cells in the mantle and in the germinal center of B-cell follicles. In the thymus, primarily expressed in the medulla on mature T-lymphocytes that have undergone thymic selection.

It is found in the membrane. Probable immunoglobulin-like cell surface receptor. On binding with CD47, mediates cell-cell adhesion. Engagement on T-cells by CD47 on antigen-presenting cells results in enhanced antigen-specific T-cell proliferation and costimulates T-cell activation. The chain is Signal-regulatory protein gamma (SIRPG) from Homo sapiens (Human).